The chain runs to 35 residues: Delta-theraphotoxin-Hm1a (35 aa).

Intrachain disulfides connect C2/C16, C9/C21, and C15/C28.

The protein belongs to the neurotoxin 10 (Hwtx-1) family. 09 (HaTx) subfamily. In terms of tissue distribution, expressed by the venom gland.

Its subcellular location is the secreted. Gating-modifier toxin that potently inhibits inactivation of the mammalian Nav1.1/SCN1A sodium channel (EC(50)=38 nM). Also moderately inhibits inactivation of Nav1.2/SCN2A (EC(50)=236 nM) and Nav1.3/SCN3A (EC(50)=220 nM) when the channels are expressed in oocytes without the beta-1 auxiliary subunit. Does not inhibit inactivation of Nav1.2/SCN2A when the channel is coexpressed with the beta-1 auxiliary subunit. When tested on Nav1.1/SCN1A channel, it enhances peak current amplitude and potently delays channel inactivation in a dose-dependent manner, leading to a large sustained current. It has no effect on the voltage-dependence of steady-state activation, and induces a depolarizing shift in the voltage dependence of inactivation. In addition, it does not modify the recovery from fast inactivation in Nav1.1/SCN1A. The binding affinity and subtype selectivity of the toxin towards Nav1.1/SCN1A channel is determined by residues within both the S1-S2 and S3-S4 loops of the domain IV voltage sensor of the channel. This toxin also weakly inhibits several subtypes of voltage-gated potassium channels. It moderately blocks Kv2.1/KCNB1 (23% inhibition at 100 nM), Kv2.2/KCNB2 (19.7% at 100 nM and 51% at 300 nM), Kv4.1/KCND1 (IC(50)=280 nM), Kv4.2/KCND2 (39% at 300 nM) and Kv4.3/KCND3 (43% at 300 nM). In vivo, intracerebroventricular injection into mice elicits convulsions, spasms, tremors and rapid death. When injected into mouse hindpaw, the toxin elicits an immediate and robust response to pain. However, intraplantar injection of toxin does not cause neurogenic inflammation or alter sensitivity to heat, indicative of a modality-specific effect on mechanosensitive neurons. In Dravet syndrome mice model, intracerebroventricular infusion of this peptide rescues mice from seizures and premature death. The chain is Delta-theraphotoxin-Hm1a from Heteroscodra maculata (Togo starburst tarantula).